A 268-amino-acid chain; its full sequence is Tryptophan synthase alpha chain (268 aa).

Catalysis depends on proton acceptor residues Glu-49 and Asp-60.

This sequence belongs to the TrpA family. As to quaternary structure, tetramer of two alpha and two beta chains.

The enzyme catalyses (1S,2R)-1-C-(indol-3-yl)glycerol 3-phosphate + L-serine = D-glyceraldehyde 3-phosphate + L-tryptophan + H2O. The protein operates within amino-acid biosynthesis; L-tryptophan biosynthesis; L-tryptophan from chorismate: step 5/5. Its function is as follows. The alpha subunit is responsible for the aldol cleavage of indoleglycerol phosphate to indole and glyceraldehyde 3-phosphate. In Dechloromonas aromatica (strain RCB), this protein is Tryptophan synthase alpha chain.